A 565-amino-acid chain; its full sequence is Sulfite reductase [NADPH] hemoprotein beta-component (565 aa).

Cysteine 429, cysteine 435, cysteine 474, and cysteine 478 together coordinate [4Fe-4S] cluster. Cysteine 478 lines the siroheme pocket.

It belongs to the nitrite and sulfite reductase 4Fe-4S domain family. In terms of assembly, alpha(8)-beta(8). The alpha component is a flavoprotein, the beta component is a hemoprotein. Siroheme serves as cofactor. The cofactor is [4Fe-4S] cluster.

The catalysed reaction is hydrogen sulfide + 3 NADP(+) + 3 H2O = sulfite + 3 NADPH + 4 H(+). Its pathway is sulfur metabolism; hydrogen sulfide biosynthesis; hydrogen sulfide from sulfite (NADPH route): step 1/1. In terms of biological role, component of the sulfite reductase complex that catalyzes the 6-electron reduction of sulfite to sulfide. This is one of several activities required for the biosynthesis of L-cysteine from sulfate. The chain is Sulfite reductase [NADPH] hemoprotein beta-component from Shewanella sp. (strain MR-7).